Consider the following 57-residue polypeptide: Aspartyl-phosphate phosphatase YnzD (57 aa).

It belongs to the spo0E family.

Aspartyl-phosphate phosphatase which specifically dephosphorylates the sporulation transcription factor Spo0A-P and negatively regulates the sporulation initiation pathway in order to control the proper timing of sporulation. The protein is Aspartyl-phosphate phosphatase YnzD (ynzD) of Bacillus subtilis (strain 168).